The chain runs to 96 residues: Large ribosomal subunit protein bL27 (96 aa).

Residues 1–11 (MLKTLENLQLF) constitute a propeptide that is removed on maturation. The segment at 13-36 (HKKGGGSTSNGRDSQAKRLGAKAA) is disordered.

Belongs to the bacterial ribosomal protein bL27 family. In terms of processing, the N-terminus is cleaved by ribosomal processing cysteine protease Prp.

The polypeptide is Large ribosomal subunit protein bL27 (Streptococcus thermophilus (strain CNRZ 1066)).